The sequence spans 227 residues: Phosphoglycolate phosphatase (227 aa).

D11 functions as the Nucleophile in the catalytic mechanism. 3 residues coordinate Mg(2+): D11, D13, and D176.

The protein belongs to the HAD-like hydrolase superfamily. CbbY/CbbZ/Gph/YieH family. Mg(2+) serves as cofactor.

It catalyses the reaction 2-phosphoglycolate + H2O = glycolate + phosphate. It functions in the pathway organic acid metabolism; glycolate biosynthesis; glycolate from 2-phosphoglycolate: step 1/1. Functionally, specifically catalyzes the dephosphorylation of 2-phosphoglycolate. Is involved in the dissimilation of the intracellular 2-phosphoglycolate formed during the DNA repair of 3'-phosphoglycolate ends, a major class of DNA lesions induced by oxidative stress. This Aliivibrio fischeri (strain ATCC 700601 / ES114) (Vibrio fischeri) protein is Phosphoglycolate phosphatase.